A 282-amino-acid polypeptide reads, in one-letter code: Probable phosphatase C1620.13 (282 aa).

The Tele-phosphohistidine intermediate role is filled by histidine 61. Glutamate 135 acts as the Proton donor/acceptor in catalysis.

Belongs to the phosphoglycerate mutase family. BPG-dependent PGAM subfamily.

It localises to the nucleus. The polypeptide is Probable phosphatase C1620.13 (Schizosaccharomyces pombe (strain 972 / ATCC 24843) (Fission yeast)).